A 305-amino-acid polypeptide reads, in one-letter code: Porphobilinogen deaminase (305 aa).

Cysteine 240 carries the post-translational modification S-(dipyrrolylmethanemethyl)cysteine.

It belongs to the HMBS family. Monomer. Dipyrromethane is required as a cofactor.

The catalysed reaction is 4 porphobilinogen + H2O = hydroxymethylbilane + 4 NH4(+). It functions in the pathway porphyrin-containing compound metabolism; protoporphyrin-IX biosynthesis; coproporphyrinogen-III from 5-aminolevulinate: step 2/4. In terms of biological role, tetrapolymerization of the monopyrrole PBG into the hydroxymethylbilane pre-uroporphyrinogen in several discrete steps. This Xylella fastidiosa (strain 9a5c) protein is Porphobilinogen deaminase (hemC).